A 214-amino-acid polypeptide reads, in one-letter code: MTMYIGLILVVLATFCQGEVVRECTFKAYLNDYLSDRTYGLLPCRYFEHGVLPKETLVVDISPNDTQGLWDECGKSDEYPCRFRDKLYWKKAYYWREKHGRSPHVPYPYCDDNEGVKPCYYYNKLMRFDQSRSVNFRSDHVWPVCDDINTDFIDEMPKPCQYNNRLYWGAKQYRMHTGKTRKPPRITNIFIRRRQGINGRLSTKPRRFKQWNLN.

A signal peptide spans 1-18 (MTMYIGLILVVLATFCQG). An N-linked (GlcNAc...) asparagine; by host glycan is attached at Asn64.

This is an uncharacterized protein from Magallana gigas (Pacific oyster).